The chain runs to 562 residues: Abrin-c (562 aa).

The N-terminal stretch at 1-34 is a signal peptide; sequence MDKTLKLLILCLAWTCSFSALRCAARTYPPVATN. Gln35 is subject to Pyrrolidone carboxylic acid. Glu198 is a catalytic residue. Residue Asn234 is glycosylated (N-linked (GlcNAc...) asparagine). 3 cysteine pairs are disulfide-bonded: Cys281–Cys303, Cys320–Cys339, and Cys363–Cys380. In terms of domain architecture, Ricin B-type lectin 1 spans 307–434; that stretch reads YEPTVRIGGR…YLMRQGWRTG (128 aa). One copy of the 1-alpha repeat lies at 317 to 359; sequence DGMCVDVYDDGYHNGNRIIAWKCKDRLEENQLWTLKSDKTIRS. The 1-beta repeat unit spans residues 360–400; it reads NGKCLTTEGYAPGNYVMIYDCTSAVAEATYWEIWDNGTIIN. 2 N-linked (GlcNAc...) asparagine glycosylation sites follow: Asn395 and Asn435. The stretch at 403–435 is one 1-gamma repeat; that stretch reads SALVLSAESSSMGGTLTVQTNEYLMRQGWRTGN. The Ricin B-type lectin 2 domain maps to 437–561; sequence TSPFVTSISG…GKPNQIWLTL (125 aa). One copy of the 2-alpha repeat lies at 448-483; that stretch reads SDLCMQAQGSNVWLADCDNNKKEQQWALYTDGSIRS. Cystine bridges form between Cys451/Cys464 and Cys490/Cys507. The stretch at 487–526 is one 2-beta repeat; the sequence is TNNCLTSKDHKQGSPIVLMACSNGWASQRWLFKNDGSIYN. One copy of the 2-gamma repeat lies at 529 to 562; the sequence is DDMVMDVKRSDPSLKEIILHPYHGKPNQIWLTLF.

This sequence in the N-terminal section; belongs to the ribosome-inactivating protein family. Type 2 RIP subfamily. In terms of assembly, disulfide-linked dimer of A and B chains.

It catalyses the reaction Endohydrolysis of the N-glycosidic bond at one specific adenosine on the 28S rRNA.. Its function is as follows. The A chain is responsible for inhibiting protein synthesis through the catalytic inactivation of 60S ribosomal subunits by removing adenine from position 4,324 of 28S rRNA. Abrin-a is more toxic than ricin. In terms of biological role, the B chain is a galactose-specific lectin that facilitates the binding of abrin to the cell membrane that precedes endocytosis. The protein is Abrin-c of Abrus precatorius (Indian licorice).